Consider the following 585-residue polypeptide: Tyramine beta-hydroxylase (585 aa).

The N-terminal stretch at 1 to 21 (MKCANAAALLFFVLCDIGVHG) is a signal peptide. The region spanning 31 to 142 (SNVTVKWQTD…GTTQFYIAAS (112 aa)) is the DOMON domain. Asparagine 32 and asparagine 71 each carry an N-linked (GlcNAc...) asparagine glycan. Tyrosine 206 is an active-site residue. 2 disulfide bridges follow: cysteine 208/cysteine 258 and cysteine 247/cysteine 270. 2 residues coordinate Cu(2+): histidine 240 and histidine 241. Residues histidine 308, histidine 386, and histidine 388 each coordinate Cu(2+). Disulfide bonds link cysteine 365–cysteine 477, cysteine 369–cysteine 534, and cysteine 440–cysteine 462. The active site involves histidine 386. N-linked (GlcNAc...) asparagine glycosylation occurs at asparagine 449. Methionine 461 serves as a coordination point for Cu(2+). A glycan (N-linked (GlcNAc...) asparagine) is linked at asparagine 483.

This sequence belongs to the copper type II ascorbate-dependent monooxygenase family. The cofactor is Cu(2+).

It localises to the cytoplasmic vesicle. The protein localises to the secretory vesicle. Its subcellular location is the synaptic vesicle. It carries out the reaction tyramine + L-ascorbate + O2 = (R)-octopamine + L-dehydroascorbate + H2O. Its function is as follows. Catalyzes the hydroxylation of tyramine into octopamine, a neurotransmitter involved in pharyngeal pumping and egg laying. The sequence is that of Tyramine beta-hydroxylase (tbh-1) from Caenorhabditis briggsae.